We begin with the raw amino-acid sequence, 799 residues long: Phenylalanine--tRNA ligase beta subunit (799 aa).

One can recognise a tRNA-binding domain in the interval 39 to 150 (GKGFSGVIVG…EHLQAGTALN (112 aa)). In terms of domain architecture, B5 spans 402-478 (FLELTIRCRL…RIYGYDHIPR (77 aa)). Residues Asp-456, Asp-462, Glu-465, and Glu-466 each contribute to the Mg(2+) site. In terms of domain architecture, FDX-ACB spans 705 to 798 (AIYPGSERDW…VSQKFANDLK (94 aa)).

The protein belongs to the phenylalanyl-tRNA synthetase beta subunit family. Type 1 subfamily. In terms of assembly, tetramer of two alpha and two beta subunits. Mg(2+) serves as cofactor.

Its subcellular location is the cytoplasm. It catalyses the reaction tRNA(Phe) + L-phenylalanine + ATP = L-phenylalanyl-tRNA(Phe) + AMP + diphosphate + H(+). In Protochlamydia amoebophila (strain UWE25), this protein is Phenylalanine--tRNA ligase beta subunit.